A 623-amino-acid polypeptide reads, in one-letter code: Glutathione import ATP-binding protein GsiA (623 aa).

2 ABC transporter domains span residues 15-269 and 314-564; these read VENL…RALL and LRVR…RKLL. ATP-binding positions include 49–56 and 357–364; these read GESGSGKS.

Belongs to the ABC transporter superfamily. Glutathione importer (TC 3.A.1.5.11) family. In terms of assembly, the complex is composed of two ATP-binding proteins (GsiA), two transmembrane proteins (GsiC and GsiD) and a solute-binding protein (GsiB).

It is found in the cell inner membrane. It catalyses the reaction glutathione(out) + ATP + H2O = glutathione(in) + ADP + phosphate + H(+). In terms of biological role, part of the ABC transporter complex GsiABCD involved in glutathione import. Responsible for energy coupling to the transport system. The chain is Glutathione import ATP-binding protein GsiA from Shigella flexneri serotype 5b (strain 8401).